Here is a 411-residue protein sequence, read N- to C-terminus: Secretion apparatus protein BsaZ (411 aa).

Transmembrane regions (helical) follow at residues 28-48 (IVALIVIATGALAAPALVDLT), 80-100 (IAAPFVLLCAAAGALPSLVQS), 137-157 (ALLYVGVFALTVRVFADLYHA), and 175-195 (IVLTVRLVLLFLLCALPVLIL). Positions 341–411 (AANRGGPPPE…APARTGDQNA (71 aa)) are disordered. Positions 370–404 (DACADNAFPDDAPPGAAAPNAGSPDSPAPDGGAPA) are enriched in low complexity.

This sequence belongs to the type III secretion exporter family.

The protein localises to the cell membrane. Its function is as follows. Part of the bsa type III secretion system, is involved in the intracellular replication of invading bacteria inside the host cell. Probably necessary for the lysis of the vacuole membrane and escape into the host cell cytoplasm. The sequence is that of Secretion apparatus protein BsaZ (bsaZ) from Burkholderia mallei (strain NCTC 10247).